We begin with the raw amino-acid sequence, 524 residues long: Chromosomal replication initiator protein DnaA (524 aa).

Residues 1-72 (MNDFWQHCSA…DLARDFWNAP (72 aa)) are domain I, interacts with DnaA modulators. The tract at residues 72–187 (PIEVQFVLDP…GEADSMYERS (116 aa)) is domain II. The interval 188–404 (KLNPVLTFDN…GALRKILAYS (217 aa)) is domain III, AAA+ region. ATP-binding residues include Gly232, Gly234, Lys235, and Thr236. A domain IV, binds dsDNA region spans residues 405–524 (KFHGREISIE…LHVLEQTLKG (120 aa)).

Belongs to the DnaA family. As to quaternary structure, oligomerizes as a right-handed, spiral filament on DNA at oriC.

Its subcellular location is the cytoplasm. In terms of biological role, plays an essential role in the initiation and regulation of chromosomal replication. ATP-DnaA binds to the origin of replication (oriC) to initiate formation of the DNA replication initiation complex once per cell cycle. Binds the DnaA box (a 9 base pair repeat at the origin) and separates the double-stranded (ds)DNA. Forms a right-handed helical filament on oriC DNA; dsDNA binds to the exterior of the filament while single-stranded (ss)DNA is stabiized in the filament's interior. The ATP-DnaA-oriC complex binds and stabilizes one strand of the AT-rich DNA unwinding element (DUE), permitting loading of DNA polymerase. After initiation quickly degrades to an ADP-DnaA complex that is not apt for DNA replication. Binds acidic phospholipids. This Burkholderia multivorans (strain ATCC 17616 / 249) protein is Chromosomal replication initiator protein DnaA.